Reading from the N-terminus, the 379-residue chain is Tryptophan--tRNA ligase, mitochondrial (379 aa).

ATP-binding positions include glutamine 42 and 48–51 (HLGN). Residues 43-51 (PTGCFHLGN) carry the 'HIGH' region motif. Residue aspartate 184 coordinates L-tryptophan. ATP is bound by residues 196–198 (GDD), valine 235, 244–248 (KMSKS), and lysine 247. The 'KMSKS' region signature appears at 244–248 (KMSKS).

It belongs to the class-I aminoacyl-tRNA synthetase family. In terms of assembly, homodimer.

It is found in the mitochondrion matrix. The enzyme catalyses tRNA(Trp) + L-tryptophan + ATP = L-tryptophyl-tRNA(Trp) + AMP + diphosphate + H(+). Mitochondrial aminoacyl-tRNA synthetase that catalyzes the attachment of tryptophan to tRNA(Trp). This Saccharomyces cerevisiae (strain ATCC 204508 / S288c) (Baker's yeast) protein is Tryptophan--tRNA ligase, mitochondrial (MSW1).